The sequence spans 243 residues: Leucyl/phenylalanyl-tRNA--protein transferase (243 aa).

Belongs to the L/F-transferase family.

Its subcellular location is the cytoplasm. It catalyses the reaction N-terminal L-lysyl-[protein] + L-leucyl-tRNA(Leu) = N-terminal L-leucyl-L-lysyl-[protein] + tRNA(Leu) + H(+). It carries out the reaction N-terminal L-arginyl-[protein] + L-leucyl-tRNA(Leu) = N-terminal L-leucyl-L-arginyl-[protein] + tRNA(Leu) + H(+). The enzyme catalyses L-phenylalanyl-tRNA(Phe) + an N-terminal L-alpha-aminoacyl-[protein] = an N-terminal L-phenylalanyl-L-alpha-aminoacyl-[protein] + tRNA(Phe). Its function is as follows. Functions in the N-end rule pathway of protein degradation where it conjugates Leu, Phe and, less efficiently, Met from aminoacyl-tRNAs to the N-termini of proteins containing an N-terminal arginine or lysine. The protein is Leucyl/phenylalanyl-tRNA--protein transferase of Vibrio cholerae serotype O1 (strain ATCC 39315 / El Tor Inaba N16961).